A 235-amino-acid chain; its full sequence is Ion-translocating oxidoreductase complex subunit E (235 aa).

5 consecutive transmembrane segments (helical) span residues 63 to 83 (LGLGLATMLVLTCTNTVISLF), 93 to 113 (IPIYVMIIATTVTAVQLLMNA), 117 to 137 (TLYQSLGIFIPLIVTNCIIIG), 152 to 172 (IWDGFSMGLGMALSLTILGAL), and 206 to 226 (SFLLFILPPGAFIGLGLLLAI).

It belongs to the NqrDE/RnfAE family. As to quaternary structure, the complex is composed of six subunits: RnfA, RnfB, RnfC, RnfD, RnfE and RnfG.

Its subcellular location is the cell inner membrane. Its function is as follows. Part of a membrane-bound complex that couples electron transfer with translocation of ions across the membrane. The protein is Ion-translocating oxidoreductase complex subunit E of Haemophilus influenzae (strain 86-028NP).